Here is a 311-residue protein sequence, read N- to C-terminus: Nod factor export ATP-binding protein I (311 aa).

One can recognise an ABC transporter domain in the interval 13-243 (IDLAGVSKSY…QIGCPVIEIY (231 aa)). An ATP-binding site is contributed by 45–52 (GPNGAGKS).

It belongs to the ABC transporter superfamily. Lipooligosaccharide exporter (TC 3.A.1.102) family. In terms of assembly, the complex is composed of two ATP-binding proteins (NodI) and two transmembrane proteins (NodJ).

The protein localises to the cell inner membrane. Its function is as follows. Part of the ABC transporter complex NodIJ involved in the export of the nodulation factors (Nod factors), the bacterial signal molecules that induce symbiosis and subsequent nodulation induction. Nod factors are LCO (lipo-chitin oligosaccharide), a modified beta-1,4-linked N-acetylglucosamine oligosaccharide. This subunit is responsible for energy coupling to the transport system. The chain is Nod factor export ATP-binding protein I from Rhizobium leguminosarum bv. viciae.